The following is a 361-amino-acid chain: UDP-N-acetylglucosamine--N-acetylmuramyl-(pentapeptide) pyrophosphoryl-undecaprenol N-acetylglucosamine transferase (361 aa).

UDP-N-acetyl-alpha-D-glucosamine is bound by residues 11–13 (TGG), N120, R161, S188, and Q282.

The protein belongs to the glycosyltransferase 28 family. MurG subfamily.

It localises to the cell inner membrane. It carries out the reaction di-trans,octa-cis-undecaprenyl diphospho-N-acetyl-alpha-D-muramoyl-L-alanyl-D-glutamyl-meso-2,6-diaminopimeloyl-D-alanyl-D-alanine + UDP-N-acetyl-alpha-D-glucosamine = di-trans,octa-cis-undecaprenyl diphospho-[N-acetyl-alpha-D-glucosaminyl-(1-&gt;4)]-N-acetyl-alpha-D-muramoyl-L-alanyl-D-glutamyl-meso-2,6-diaminopimeloyl-D-alanyl-D-alanine + UDP + H(+). It participates in cell wall biogenesis; peptidoglycan biosynthesis. Its function is as follows. Cell wall formation. Catalyzes the transfer of a GlcNAc subunit on undecaprenyl-pyrophosphoryl-MurNAc-pentapeptide (lipid intermediate I) to form undecaprenyl-pyrophosphoryl-MurNAc-(pentapeptide)GlcNAc (lipid intermediate II). This chain is UDP-N-acetylglucosamine--N-acetylmuramyl-(pentapeptide) pyrophosphoryl-undecaprenol N-acetylglucosamine transferase, found in Prochlorococcus marinus (strain MIT 9303).